Reading from the N-terminus, the 95-residue chain is Aspartyl/glutamyl-tRNA(Asn/Gln) amidotransferase subunit C (95 aa).

This sequence belongs to the GatC family. Heterotrimer of A, B and C subunits.

The enzyme catalyses L-glutamyl-tRNA(Gln) + L-glutamine + ATP + H2O = L-glutaminyl-tRNA(Gln) + L-glutamate + ADP + phosphate + H(+). It catalyses the reaction L-aspartyl-tRNA(Asn) + L-glutamine + ATP + H2O = L-asparaginyl-tRNA(Asn) + L-glutamate + ADP + phosphate + 2 H(+). Its function is as follows. Allows the formation of correctly charged Asn-tRNA(Asn) or Gln-tRNA(Gln) through the transamidation of misacylated Asp-tRNA(Asn) or Glu-tRNA(Gln) in organisms which lack either or both of asparaginyl-tRNA or glutaminyl-tRNA synthetases. The reaction takes place in the presence of glutamine and ATP through an activated phospho-Asp-tRNA(Asn) or phospho-Glu-tRNA(Gln). In Desulfosudis oleivorans (strain DSM 6200 / JCM 39069 / Hxd3) (Desulfococcus oleovorans), this protein is Aspartyl/glutamyl-tRNA(Asn/Gln) amidotransferase subunit C.